Consider the following 170-residue polypeptide: Acireductone dioxygenase (170 aa).

His99, His101, Glu105, and His144 together coordinate Fe(2+). His99, His101, Glu105, and His144 together coordinate Ni(2+).

This sequence belongs to the acireductone dioxygenase (ARD) family. As to quaternary structure, monomer. Fe(2+) is required as a cofactor. Ni(2+) serves as cofactor.

The catalysed reaction is 1,2-dihydroxy-5-(methylsulfanyl)pent-1-en-3-one + O2 = 3-(methylsulfanyl)propanoate + CO + formate + 2 H(+). It catalyses the reaction 1,2-dihydroxy-5-(methylsulfanyl)pent-1-en-3-one + O2 = 4-methylsulfanyl-2-oxobutanoate + formate + 2 H(+). The protein operates within amino-acid biosynthesis; L-methionine biosynthesis via salvage pathway; L-methionine from S-methyl-5-thio-alpha-D-ribose 1-phosphate: step 5/6. Catalyzes 2 different reactions between oxygen and the acireductone 1,2-dihydroxy-3-keto-5-methylthiopentene (DHK-MTPene) depending upon the metal bound in the active site. Fe-containing acireductone dioxygenase (Fe-ARD) produces formate and 2-keto-4-methylthiobutyrate (KMTB), the alpha-ketoacid precursor of methionine in the methionine recycle pathway. Ni-containing acireductone dioxygenase (Ni-ARD) produces methylthiopropionate, carbon monoxide and formate, and does not lie on the methionine recycle pathway. This chain is Acireductone dioxygenase, found in Bacillus cereus (strain ATCC 14579 / DSM 31 / CCUG 7414 / JCM 2152 / NBRC 15305 / NCIMB 9373 / NCTC 2599 / NRRL B-3711).